Consider the following 81-residue polypeptide: MSSQEEIIKTLNKKDIKDIITKNISFLVEPQILFYAKKRNRIVGYLEVNGRHYRFELIFSKDNSVSITIGELVVFGSSDLK.

This is an uncharacterized protein from Sulfolobus islandicus rod-shaped virus 1 (SIRV-1).